Here is a 97-residue protein sequence, read N- to C-terminus: Large ribosomal subunit protein eL21 (97 aa).

A disordered region spans residues 1-23 (MTKMSKGPRSGSRRVMTKSVKNK).

It belongs to the eukaryotic ribosomal protein eL21 family.

The sequence is that of Large ribosomal subunit protein eL21 from Picrophilus torridus (strain ATCC 700027 / DSM 9790 / JCM 10055 / NBRC 100828 / KAW 2/3).